Here is a 437-residue protein sequence, read N- to C-terminus: Immunoglobulin superfamily member 11 (437 aa).

The signal sequence occupies residues 1–22; the sequence is MTCRGSPLAPLLLFSLHGVAAS. Residues 23-136 form the Ig-like V-type domain; sequence LEVSESPGSV…DRGGRNIGVT (114 aa). Topologically, residues 23 to 241 are extracellular; it reads LEVSESPGSV…VISPQPRSIG (219 aa). 2 disulfide bridges follow: C44-C120 and C165-C215. N-linked (GlcNAc...) asparagine glycosylation is present at N102. One can recognise an Ig-like C2-type domain in the interval 144 to 234; sequence PSAPHCQIQG…TCLLDLQVIS (91 aa). Residues 242-262 form a helical membrane-spanning segment; the sequence is LIAGAIGTGAVIIIFCIALIL. Over 263–437 the chain is Cytoplasmic; that stretch reads GAFFYWRSKN…PAQSRAGSLV (175 aa). The residue at position 379 (R379) is an Omega-N-methylarginine. The interval 382–405 is disordered; that stretch reads SLPAVSRSNGSVSRKARPPPVPSL.

In terms of processing, N-glycosylated.

It is found in the cell membrane. Functionally, functions as a cell adhesion molecule through homophilic interaction. Stimulates cell growth. This is Immunoglobulin superfamily member 11 (IGSF11) from Bos taurus (Bovine).